A 362-amino-acid polypeptide reads, in one-letter code: Serine/threonine-protein kinase ZRK4 (362 aa).

A disordered region spans residues 1–23 (MNDQKMSCWRKKSKKKNSEANQR). The Protein kinase domain occupies 35 to 362 (LEDLIELCNG…KELKRIERWT (328 aa)). Residues 41-49 (LCNGKSNPI) and lysine 89 contribute to the ATP site. Aspartate 185 serves as the catalytic Proton acceptor.

This sequence belongs to the protein kinase superfamily. Ser/Thr protein kinase family. ZRK subfamily.

The enzyme catalyses L-seryl-[protein] + ATP = O-phospho-L-seryl-[protein] + ADP + H(+). The catalysed reaction is L-threonyl-[protein] + ATP = O-phospho-L-threonyl-[protein] + ADP + H(+). The chain is Serine/threonine-protein kinase ZRK4 from Arabidopsis thaliana (Mouse-ear cress).